A 336-amino-acid polypeptide reads, in one-letter code: Holliday junction branch migration complex subunit RuvB (336 aa).

The interval 4–184 is large ATPase domain (RuvB-L); it reads ADRLVAPGSI…FGIVQRLEFY (181 aa). Residues Ile23, Arg24, Gly65, Lys68, Thr69, Thr70, 131-133, Arg174, Tyr184, and Arg221 contribute to the ATP site; that span reads EDY. Thr69 is a binding site for Mg(2+). Residues 185–255 form a small ATPAse domain (RuvB-S) region; the sequence is QVADLQHIVS…VASQALDMLN (71 aa). The segment at 258-336 is head domain (RuvB-H); the sequence is AEGFDYMDRK…HFGITPPQMP (79 aa). The DNA site is built by Arg294, Arg313, and Arg318.

This sequence belongs to the RuvB family. In terms of assembly, homohexamer. Forms an RuvA(8)-RuvB(12)-Holliday junction (HJ) complex. HJ DNA is sandwiched between 2 RuvA tetramers; dsDNA enters through RuvA and exits via RuvB. An RuvB hexamer assembles on each DNA strand where it exits the tetramer. Each RuvB hexamer is contacted by two RuvA subunits (via domain III) on 2 adjacent RuvB subunits; this complex drives branch migration. In the full resolvosome a probable DNA-RuvA(4)-RuvB(12)-RuvC(2) complex forms which resolves the HJ.

It is found in the cytoplasm. It carries out the reaction ATP + H2O = ADP + phosphate + H(+). Its function is as follows. The RuvA-RuvB-RuvC complex processes Holliday junction (HJ) DNA during genetic recombination and DNA repair, while the RuvA-RuvB complex plays an important role in the rescue of blocked DNA replication forks via replication fork reversal (RFR). RuvA specifically binds to HJ cruciform DNA, conferring on it an open structure. The RuvB hexamer acts as an ATP-dependent pump, pulling dsDNA into and through the RuvAB complex. RuvB forms 2 homohexamers on either side of HJ DNA bound by 1 or 2 RuvA tetramers; 4 subunits per hexamer contact DNA at a time. Coordinated motions by a converter formed by DNA-disengaged RuvB subunits stimulates ATP hydrolysis and nucleotide exchange. Immobilization of the converter enables RuvB to convert the ATP-contained energy into a lever motion, pulling 2 nucleotides of DNA out of the RuvA tetramer per ATP hydrolyzed, thus driving DNA branch migration. The RuvB motors rotate together with the DNA substrate, which together with the progressing nucleotide cycle form the mechanistic basis for DNA recombination by continuous HJ branch migration. Branch migration allows RuvC to scan DNA until it finds its consensus sequence, where it cleaves and resolves cruciform DNA. This chain is Holliday junction branch migration complex subunit RuvB, found in Cronobacter sakazakii (strain ATCC BAA-894) (Enterobacter sakazakii).